A 327-amino-acid chain; its full sequence is Ribose operon repressor (327 aa).

The HTH lacI-type domain maps to 1 to 56; sequence MTTIKQVALEAGVSKSTVSRFIAQNGYVSDEAREKIERAIKKLNFRPNLSAQSLKT. Residues 4 to 23 constitute a DNA-binding region (H-T-H motif); that stretch reads IKQVALEAGVSKSTVSRFIA.

In terms of biological role, transcriptional repressor for the ribose rbsDACBK operon. The protein is Ribose operon repressor (rbsR) of Lactococcus lactis subsp. lactis (strain IL1403) (Streptococcus lactis).